A 193-amino-acid polypeptide reads, in one-letter code: dCTP deaminase (193 aa).

DCTP-binding positions include 110–115, Asp-128, 136–138, Tyr-171, Lys-178, and Gln-182; these read RSSLAR and VLE. Glu-138 (proton donor/acceptor) is an active-site residue. Residues 169-193 are disordered; sequence RPYNRRQDAKYRDQQGAVASRIDKD.

The protein belongs to the dCTP deaminase family. As to quaternary structure, homotrimer.

It catalyses the reaction dCTP + H2O + H(+) = dUTP + NH4(+). The protein operates within pyrimidine metabolism; dUMP biosynthesis; dUMP from dCTP (dUTP route): step 1/2. In terms of biological role, catalyzes the deamination of dCTP to dUTP. In Salmonella arizonae (strain ATCC BAA-731 / CDC346-86 / RSK2980), this protein is dCTP deaminase.